We begin with the raw amino-acid sequence, 439 residues long: (p)ppApp synthetase toxin Tas1 (439 aa).

It is found in the secreted. It catalyses the reaction AMP + ATP = adenosine 3'-diphosphate,5'-phosphate + AMP + H(+). The catalysed reaction is ADP + ATP = adenosine 3'-diphosphate,5'-diphosphate + AMP. It carries out the reaction 2 ATP = adenosine 3'-diphosphate,5'-triphosphate + AMP. In terms of biological role, type VI secretion exported toxin that pyrophosphorylates adenosine nucleotides to produce (p)ppApp. Thereby, depletes cellular ADP and ATP to dysregulate central metabolism in competitor cells. This Pseudomonas aeruginosa (strain UCBPP-PA14) protein is (p)ppApp synthetase toxin Tas1 (tas1).